Here is a 380-residue protein sequence, read N- to C-terminus: Putative 8-amino-7-oxononanoate synthase (380 aa).

A substrate-binding site is contributed by Arg-18. 106–107 lines the pyridoxal 5'-phosphate pocket; the sequence is GY. His-131 contacts substrate. Pyridoxal 5'-phosphate-binding positions include Ser-179, 205 to 208, and 236 to 239; these read DEAH and TFGK. Lys-239 carries the N6-(pyridoxal phosphate)lysine modification. Residue Thr-352 coordinates substrate.

The protein belongs to the class-II pyridoxal-phosphate-dependent aminotransferase family. BioF subfamily. In terms of assembly, homodimer. Pyridoxal 5'-phosphate is required as a cofactor.

It carries out the reaction 6-carboxyhexanoyl-[ACP] + L-alanine + H(+) = (8S)-8-amino-7-oxononanoate + holo-[ACP] + CO2. It functions in the pathway cofactor biosynthesis; biotin biosynthesis. Functionally, catalyzes the decarboxylative condensation of pimeloyl-[acyl-carrier protein] and L-alanine to produce 8-amino-7-oxononanoate (AON), [acyl-carrier protein], and carbon dioxide. This Haemophilus influenzae (strain ATCC 51907 / DSM 11121 / KW20 / Rd) protein is Putative 8-amino-7-oxononanoate synthase (bioF).